We begin with the raw amino-acid sequence, 276 residues long: MIEIKNLKFKYNQDQTSYTLNDVSFHVKRGEWLSIVGHNGSGKSTTARLIGGLLVADSGQIIVDGQELTEETVWDIRDKIGMVFQNPDNQFVGATVEDDVAFGLENKGLPYKEMVSRVQEALSFVGMMDFKDREPARLSGGQKQRVAIAGIIAMRPSILILDEATSMLDPEGRQELIQSIEDIRQQYGMTVLSITHDLDEVAMSNRVLVLKQGKVESISSPRELFSRGSELVDLGLDIPFSALLTQKLKNQGLIDCEGYLTEKELVEQLWEYLSKM.

Residues 2 to 237 (IEIKNLKFKY…GSELVDLGLD (236 aa)) form the ABC transporter domain. 37–44 (GHNGSGKS) is a binding site for ATP.

This sequence belongs to the ABC transporter superfamily. Energy-coupling factor EcfA family. Forms a stable energy-coupling factor (ECF) transporter complex composed of 2 membrane-embedded substrate-binding proteins (S component), 2 ATP-binding proteins (A component) and 2 transmembrane proteins (T component).

It localises to the cell membrane. Functionally, ATP-binding (A) component of a common energy-coupling factor (ECF) ABC-transporter complex. Unlike classic ABC transporters this ECF transporter provides the energy necessary to transport a number of different substrates. The sequence is that of Energy-coupling factor transporter ATP-binding protein EcfA1 from Streptococcus thermophilus (strain ATCC BAA-491 / LMD-9).